Here is a 224-residue protein sequence, read N- to C-terminus: Cytidylate kinase (224 aa).

9–17 (GPSGVGKGT) is a binding site for ATP.

Belongs to the cytidylate kinase family. Type 1 subfamily.

The protein resides in the cytoplasm. It catalyses the reaction CMP + ATP = CDP + ADP. The enzyme catalyses dCMP + ATP = dCDP + ADP. This is Cytidylate kinase from Dichelobacter nodosus (strain VCS1703A).